Reading from the N-terminus, the 245-residue chain is Protein canopy homolog 4 (245 aa).

An N-terminal signal peptide occupies residues 1–27; sequence MCGLRFIMGPVRLEILLFILAAYGAWA. 3 disulfides stabilise this stretch: Cys-44–Cys-202, Cys-47–Cys-190, and Cys-100–Cys-162. The tract at residues 207–245 is disordered; sequence WTGKEKISDGQEEADDEEEEEEEEITKTSGNPKHDPEDL. Residues 209 to 237 are a coiled coil; it reads GKEKISDGQEEADDEEEEEEEEITKTSGN. Over residues 216–230 the composition is skewed to acidic residues; it reads GQEEADDEEEEEEEE.

It belongs to the canopy family. In terms of assembly, interacts with TLR4. In terms of tissue distribution, highly expressed in lung, spleen, thymus, and uterus. Moderately expressed in kidney, stomach and placenta. Weakly expressed in brain, heart, liver, small intestine, skeletal muscle and testis.

The protein resides in the secreted. In terms of biological role, plays a role in the regulation of the cell surface expression of TLR4. The protein is Protein canopy homolog 4 (Cnpy4) of Mus musculus (Mouse).